The primary structure comprises 379 residues: MKIMIFICGEGLGHTSRCLALGKELLNAGHEIKFGAYGYSKELVEKTGYTAQEIPSEIKLVGKAGSLDLTGSIEATLKSAQLLGGPKLLKLLREFKPDVVVSDSYYLGTLAAMVLKLPVYLIINQSNMEEFFKNRGVPVRIIGKLTKKFYKEVFEKTDKIIIPDYPLPYTVCRKNLNFAPKLRGKLFYSGPLVREKYEDIDSIPLEKPHVVSLIGGFGYREPIFRKVLTTAMLDPGINYTLISGPSLDPSKLGGVPKNVRILNFVEDTYPYIKSSDAVIAPGGHSTIMEALSFGVPILSFPDEGHSEQESNAAVVEEEGYGRMLSYSTPPEVILECIREVIEDEAYRNKVERLQRLSGELDGPKTIRKLLEKEIGKKAS.

This sequence belongs to the glycosyltransferase 28 family.

This is an uncharacterized protein from Methanosarcina acetivorans (strain ATCC 35395 / DSM 2834 / JCM 12185 / C2A).